Here is a 79-residue protein sequence, read N- to C-terminus: Small ribosomal subunit protein uS17 (79 aa).

The protein belongs to the universal ribosomal protein uS17 family. As to quaternary structure, part of the 30S ribosomal subunit.

One of the primary rRNA binding proteins, it binds specifically to the 5'-end of 16S ribosomal RNA. The protein is Small ribosomal subunit protein uS17 of Rhizobium johnstonii (strain DSM 114642 / LMG 32736 / 3841) (Rhizobium leguminosarum bv. viciae).